A 266-amino-acid polypeptide reads, in one-letter code: Thiazole synthase (266 aa).

K110 functions as the Schiff-base intermediate with DXP in the catalytic mechanism. Residues G171, 197-198 (AG), and 219-220 (AT) each bind 1-deoxy-D-xylulose 5-phosphate.

The protein belongs to the ThiG family. As to quaternary structure, homotetramer. Forms heterodimers with either ThiH or ThiS.

It is found in the cytoplasm. The enzyme catalyses [ThiS sulfur-carrier protein]-C-terminal-Gly-aminoethanethioate + 2-iminoacetate + 1-deoxy-D-xylulose 5-phosphate = [ThiS sulfur-carrier protein]-C-terminal Gly-Gly + 2-[(2R,5Z)-2-carboxy-4-methylthiazol-5(2H)-ylidene]ethyl phosphate + 2 H2O + H(+). It participates in cofactor biosynthesis; thiamine diphosphate biosynthesis. Functionally, catalyzes the rearrangement of 1-deoxy-D-xylulose 5-phosphate (DXP) to produce the thiazole phosphate moiety of thiamine. Sulfur is provided by the thiocarboxylate moiety of the carrier protein ThiS. In vitro, sulfur can be provided by H(2)S. This is Thiazole synthase from Thermobifida fusca (strain YX).